The primary structure comprises 686 residues: U3 small nucleolar RNA-associated protein 4 homolog (686 aa).

WD repeat units lie at residues Tyr-14–Lys-53, Gly-57–Thr-96, Ala-99–Ala-138, Arg-143–Lys-181, Lys-193–Ser-231, Val-234–Ser-273, His-285–Asn-322, Asp-324–Arg-359, Ser-435–Leu-474, Gly-482–Thr-521, and Ala-524–Trp-563. A Glycyl lysine isopeptide (Lys-Gly) (interchain with G-Cter in SUMO2) cross-link involves residue Lys-321.

As to quaternary structure, interacts with HIVEP1 Interacts with NOL11. Part of the small subunit (SSU) processome, composed of more than 70 proteins and the RNA chaperone small nucleolar RNA (snoRNA) U3. May be a component of the proposed t-UTP subcomplex of the ribosomal small subunit (SSU) processome containing at least UTP4, WDR43, HEATR1, UTP15, WDR75. In terms of processing, may be phosphorylated during mitosis; may control the association of this protein with WRD43 and UTP15. Expressed in liver.

It is found in the nucleus. Its subcellular location is the nucleolus. The protein resides in the chromosome. Its function is as follows. Ribosome biogenesis factor. Involved in nucleolar processing of pre-18S ribosomal RNA. Part of the small subunit (SSU) processome, first precursor of the small eukaryotic ribosomal subunit. During the assembly of the SSU processome in the nucleolus, many ribosome biogenesis factors, an RNA chaperone and ribosomal proteins associate with the nascent pre-rRNA and work in concert to generate RNA folding, modifications, rearrangements and cleavage as well as targeted d Involved in SSU pre-rRNA processing at sites A', A0, 1 and 2b. Required for optimal pre-ribosomal RNA transcription by RNA polymerase. May be a transcriptional regulator. This Mus musculus (Mouse) protein is U3 small nucleolar RNA-associated protein 4 homolog (Utp4).